Consider the following 414-residue polypeptide: Autophagy-related protein 18 (414 aa).

WD repeat units follow at residues 1-36, 69-114, 185-225, and 230-269; these read MAMN…KSYE, KRQS…LLYT, AHRS…KLYQ, and SIPS…SSRE. The L/FRRG motif motif lies at 226–230; that stretch reads FRRGS. The interval 261 to 314 is disordered; sequence LSHQTSSREGSPSSALSRERAASQSSLGTSPDPDDPTDDMESSEIASRKHNGTL. Over residues 262–289 the composition is skewed to polar residues; the sequence is SHQTSSREGSPSSALSRERAASQSSLGT. Residues 292 to 302 are compositionally biased toward acidic residues; sequence DPDDPTDDMES. 2 WD repeats span residues 309 to 355 and 367 to 407; these read KHNG…AWIK and GNAG…GGEG.

This sequence belongs to the WD repeat PROPPIN family. As to quaternary structure, component of the PI(3,5)P2 regulatory complex.

It localises to the preautophagosomal structure membrane. The protein resides in the vacuole membrane. It is found in the endosome membrane. Functionally, the PI(3,5)P2 regulatory complex regulates both the synthesis and turnover of phosphatidylinositol 3,5-bisphosphate (PtdIns(3,5)P2). Necessary for proper vacuole morphology. Plays an important role in osmotically-induced vacuole fragmentation. Required for cytoplasm to vacuole transport (Cvt) vesicle formation, pexophagy and starvation-induced autophagy. Involved in correct atg9 trafficking to the pre-autophagosomal structure. Might also be involved in premeiotic DNA replication. The polypeptide is Autophagy-related protein 18 (atg18) (Aspergillus terreus (strain NIH 2624 / FGSC A1156)).